Reading from the N-terminus, the 32-residue chain is Calcitonin (32 aa).

A disulfide bond links C1 and C7. P32 bears the Proline amide mark.

The protein belongs to the calcitonin family.

Its subcellular location is the secreted. Causes a rapid but short-lived drop in the level of calcium and phosphate in blood by promoting the incorporation of those ions in the bones. The polypeptide is Calcitonin (Aquarana catesbeiana (American bullfrog)).